Here is a 260-residue protein sequence, read N- to C-terminus: 3'-5' ssDNA/RNA exonuclease TatD (260 aa).

Positions 92, 128, and 153 each coordinate a divalent metal cation.

The protein belongs to the metallo-dependent hydrolases superfamily. TatD-type hydrolase family. TatD subfamily. As to quaternary structure, monomer. It depends on Mg(2+) as a cofactor.

It localises to the cytoplasm. In terms of biological role, 3'-5' exonuclease that prefers single-stranded DNA and RNA. May play a role in the H(2)O(2)-induced DNA damage repair. The polypeptide is 3'-5' ssDNA/RNA exonuclease TatD (Pectobacterium parmentieri (strain WPP163) (Pectobacterium wasabiae (strain WPP163))).